Consider the following 338-residue polypeptide: Ketol-acid reductoisomerase (NADP(+)) (338 aa).

Residues 1-181 (MKVYYDKDAD…GGTKGGVIET (181 aa)) enclose the KARI N-terminal Rossmann domain. NADP(+)-binding positions include 24–27 (YGSQ), R47, S52, and 82–85 (DETQ). The active site involves H107. G133 provides a ligand contact to NADP(+). Positions 182 to 327 (SFREETETDL…AELRAMMPWI (146 aa)) constitute a KARI C-terminal knotted domain. Mg(2+) is bound by residues D190, E194, E226, and E230. S251 is a binding site for substrate.

Belongs to the ketol-acid reductoisomerase family. Mg(2+) serves as cofactor.

It carries out the reaction (2R)-2,3-dihydroxy-3-methylbutanoate + NADP(+) = (2S)-2-acetolactate + NADPH + H(+). It catalyses the reaction (2R,3R)-2,3-dihydroxy-3-methylpentanoate + NADP(+) = (S)-2-ethyl-2-hydroxy-3-oxobutanoate + NADPH + H(+). Its pathway is amino-acid biosynthesis; L-isoleucine biosynthesis; L-isoleucine from 2-oxobutanoate: step 2/4. It participates in amino-acid biosynthesis; L-valine biosynthesis; L-valine from pyruvate: step 2/4. In terms of biological role, involved in the biosynthesis of branched-chain amino acids (BCAA). Catalyzes an alkyl-migration followed by a ketol-acid reduction of (S)-2-acetolactate (S2AL) to yield (R)-2,3-dihydroxy-isovalerate. In the isomerase reaction, S2AL is rearranged via a Mg-dependent methyl migration to produce 3-hydroxy-3-methyl-2-ketobutyrate (HMKB). In the reductase reaction, this 2-ketoacid undergoes a metal-dependent reduction by NADPH to yield (R)-2,3-dihydroxy-isovalerate. The polypeptide is Ketol-acid reductoisomerase (NADP(+)) (Laribacter hongkongensis (strain HLHK9)).